The sequence spans 163 residues: ADP-ribosylation factor-like protein 2-binding protein (163 aa).

The protein belongs to the ARL2BP family. Found in a complex with ARL2BP, ARL2 and SLC25A6. Found in a complex with ARL2, ARL2BP and SLC25A4. Interacts with STAT2, STAT3 and STAT4. Interacts with GTP-bound ARL2 and ARL3; the complex ARL2-ARL2BP as well as ARL2BP alone, binds to SLC25A4. Interaction with ARL2 may be required for targeting to cilia basal body. Interacts with STAT3; interaction is enhanced with ARL2. Expressed in retina pigment epithelial cells (at protein level). Widely expressed.

The protein resides in the cytoplasm. The protein localises to the mitochondrion intermembrane space. It is found in the cytoskeleton. Its subcellular location is the microtubule organizing center. It localises to the centrosome. The protein resides in the nucleus. The protein localises to the spindle. It is found in the cilium basal body. Functionally, together with ARL2, plays a role in the nuclear translocation, retention and transcriptional activity of STAT3. May play a role as an effector of ARL2. The protein is ADP-ribosylation factor-like protein 2-binding protein (ARL2BP) of Homo sapiens (Human).